A 729-amino-acid polypeptide reads, in one-letter code: DNA topoisomerase 3 (729 aa).

Residues 3-136 enclose the Toprim domain; it reads KKAVLAEKPS…VKRLWISSVT (134 aa). Mg(2+) contacts are provided by E9 and D105. One can recognise a Topo IA-type catalytic domain in the interval 153–590; that stretch reads YETLYAAAAA…EMKEYAKAVV (438 aa). The interval 187 to 192 is interaction with DNA; sequence SCGRVQ. Y311 acts as the O-(5'-phospho-DNA)-tyrosine intermediate in catalysis. Positions 680 to 708 are disordered; that stretch reads FEQRRKQNKHKNVSKREVQSYMKKQNKQD.

The protein belongs to the type IA topoisomerase family. Mg(2+) is required as a cofactor.

The enzyme catalyses ATP-independent breakage of single-stranded DNA, followed by passage and rejoining.. In terms of biological role, releases the supercoiling and torsional tension of DNA, which is introduced during the DNA replication and transcription, by transiently cleaving and rejoining one strand of the DNA duplex. Introduces a single-strand break via transesterification at a target site in duplex DNA. The scissile phosphodiester is attacked by the catalytic tyrosine of the enzyme, resulting in the formation of a DNA-(5'-phosphotyrosyl)-enzyme intermediate and the expulsion of a 3'-OH DNA strand. The free DNA strand then undergoes passage around the unbroken strand, thus removing DNA supercoils. Finally, in the religation step, the DNA 3'-OH attacks the covalent intermediate to expel the active-site tyrosine and restore the DNA phosphodiester backbone. The chain is DNA topoisomerase 3 from Shouchella clausii (strain KSM-K16) (Alkalihalobacillus clausii).